Consider the following 283-residue polypeptide: MNTVKTVRELRAAVARARSEGKRIGFVPTMGNLHAGHAALVKKAGERADFVVVSIFVNPLQFGPSEDLDKYPRTLAADQERLLEAGCHLLFTPGVEEMYPDGMDGQTRIHVPGVSEGLCGASRPGHFEGVATVVSKLLNMVQPDLALFGEKDFQQLAVIRKLVRDLNLPVQIFGEPTVRAADGLALSSRNGYLDEQQRAAAPAIYRTLRQLGERIRAGAEDFPALLADARQALEQAGLRPDYLEIREPISLRPGVPGDRQLVILAAAYLGGTRLIDNLSVHLD.

30-37 (MGNLHAGH) serves as a coordination point for ATP. The Proton donor role is filled by His37. Residue Gln61 coordinates (R)-pantoate. Gln61 contributes to the beta-alanine binding site. Residue 149–152 (GEKD) participates in ATP binding. Gln155 provides a ligand contact to (R)-pantoate. ATP is bound by residues Val178 and 186–189 (LSSR).

This sequence belongs to the pantothenate synthetase family. In terms of assembly, homodimer.

The protein resides in the cytoplasm. It catalyses the reaction (R)-pantoate + beta-alanine + ATP = (R)-pantothenate + AMP + diphosphate + H(+). It participates in cofactor biosynthesis; (R)-pantothenate biosynthesis; (R)-pantothenate from (R)-pantoate and beta-alanine: step 1/1. Its function is as follows. Catalyzes the condensation of pantoate with beta-alanine in an ATP-dependent reaction via a pantoyl-adenylate intermediate. In Pseudomonas paraeruginosa (strain DSM 24068 / PA7) (Pseudomonas aeruginosa (strain PA7)), this protein is Pantothenate synthetase.